A 161-amino-acid polypeptide reads, in one-letter code: MPRAGRAPAEGGPAPGTRSSRCLRPRPLAWRRLVPNFGAWAPRKGAARVGRPVLSPRTSGAAGEPTCGAGSPGTLEEGVASGRTRRRTQSAGEVAKCRWGLGQEPLCPRGAVLLNSFSPPAWPQFPPALRLRALAWPQPRGPACGSTAQWPPRGDPTWRIS.

The segment covering 1–16 (MPRAGRAPAEGGPAPG) has biased composition (low complexity). 3 disordered regions span residues 1 to 23 (MPRA…SRCL), 50 to 91 (GRPV…TQSA), and 140 to 161 (RGPA…WRIS).

This is an uncharacterized protein from Homo sapiens (Human).